Reading from the N-terminus, the 179-residue chain is Ribosome-recycling factor (179 aa).

Belongs to the RRF family.

The protein localises to the cytoplasm. Its function is as follows. Responsible for the release of ribosomes from messenger RNA at the termination of protein biosynthesis. May increase the efficiency of translation by recycling ribosomes from one round of translation to another. This chain is Ribosome-recycling factor, found in Chlamydia muridarum (strain MoPn / Nigg).